The sequence spans 189 residues: Peptidyl-tRNA hydrolase (189 aa).

Residue Tyr-15 coordinates tRNA. Catalysis depends on His-20, which acts as the Proton acceptor. TRNA is bound by residues Phe-64 and Asn-66.

The protein belongs to the PTH family. In terms of assembly, monomer.

The protein resides in the cytoplasm. The enzyme catalyses an N-acyl-L-alpha-aminoacyl-tRNA + H2O = an N-acyl-L-amino acid + a tRNA + H(+). Its function is as follows. Hydrolyzes ribosome-free peptidyl-tRNAs (with 1 or more amino acids incorporated), which drop off the ribosome during protein synthesis, or as a result of ribosome stalling. Functionally, catalyzes the release of premature peptidyl moieties from peptidyl-tRNA molecules trapped in stalled 50S ribosomal subunits, and thus maintains levels of free tRNAs and 50S ribosomes. This chain is Peptidyl-tRNA hydrolase, found in Persephonella marina (strain DSM 14350 / EX-H1).